The chain runs to 374 residues: Chaperone protein DnaJ (374 aa).

The J domain occupies 5–69 (NYYQILGVSK…QKRAAYDRLG (65 aa)). The CR-type zinc-finger motif lies at 137-215 (GIEKNISFSS…CHGMGRYHKQ (79 aa)). Zn(2+)-binding residues include Cys150, Cys153, Cys167, Cys170, Cys189, Cys192, Cys203, and Cys206. CXXCXGXG motif repeat units follow at residues 150–157 (CDTCHGSG), 167–174 (CDACSGVG), 189–196 (CHKCQGNG), and 203–210 (CKKCHGMG).

Belongs to the DnaJ family. As to quaternary structure, homodimer. The cofactor is Zn(2+).

Its subcellular location is the cytoplasm. In terms of biological role, participates actively in the response to hyperosmotic and heat shock by preventing the aggregation of stress-denatured proteins and by disaggregating proteins, also in an autonomous, DnaK-independent fashion. Unfolded proteins bind initially to DnaJ; upon interaction with the DnaJ-bound protein, DnaK hydrolyzes its bound ATP, resulting in the formation of a stable complex. GrpE releases ADP from DnaK; ATP binding to DnaK triggers the release of the substrate protein, thus completing the reaction cycle. Several rounds of ATP-dependent interactions between DnaJ, DnaK and GrpE are required for fully efficient folding. Also involved, together with DnaK and GrpE, in the DNA replication of plasmids through activation of initiation proteins. In Rickettsia massiliae (strain Mtu5), this protein is Chaperone protein DnaJ.